A 153-amino-acid polypeptide reads, in one-letter code: Ribosome maturation factor RimP (153 aa).

This sequence belongs to the RimP family.

It localises to the cytoplasm. Functionally, required for maturation of 30S ribosomal subunits. The protein is Ribosome maturation factor RimP of Trichormus variabilis (strain ATCC 29413 / PCC 7937) (Anabaena variabilis).